The following is a 404-amino-acid chain: Pre-heme d1 synthase (404 aa).

One can recognise a Radical SAM core domain in the interval 22-235; that stretch reads GTPKPVVIWN…LIARALESAE (214 aa). Positions 36, 40, 43, 340, 343, 349, and 371 each coordinate [4Fe-4S] cluster.

The protein belongs to the radical SAM superfamily. [4Fe-4S] cluster is required as a cofactor.

Its pathway is porphyrin-containing compound metabolism. In terms of biological role, involved in heme d1 biosynthesis. Radical SAM enzyme that catalyzes the removal of two propionate side chains from the intermediate 12,18-didecarboxysiroheme (DDSH) and may introduce the keto functions on rings A and B, yielding the heme d1 precursor dihydro-heme d1. The polypeptide is Pre-heme d1 synthase (Dinoroseobacter shibae (strain DSM 16493 / NCIMB 14021 / DFL 12)).